Reading from the N-terminus, the 486-residue chain is Cysteine--tRNA ligase (486 aa).

Residue Cys-30 coordinates Zn(2+). The 'HIGH' region motif lies at 32–42; sequence PTVYDRAHLGN. 3 residues coordinate Zn(2+): Cys-221, His-246, and Glu-250. The 'KMSKS' region signature appears at 279–283; sequence KMSKS. Lys-282 contacts ATP.

This sequence belongs to the class-I aminoacyl-tRNA synthetase family. In terms of assembly, monomer. Zn(2+) is required as a cofactor.

The protein localises to the cytoplasm. It catalyses the reaction tRNA(Cys) + L-cysteine + ATP = L-cysteinyl-tRNA(Cys) + AMP + diphosphate. The protein is Cysteine--tRNA ligase of Cereibacter sphaeroides (strain ATCC 17025 / ATH 2.4.3) (Rhodobacter sphaeroides).